We begin with the raw amino-acid sequence, 509 residues long: Maturase K (509 aa).

Belongs to the intron maturase 2 family. MatK subfamily.

It is found in the plastid. Its subcellular location is the chloroplast. In terms of biological role, usually encoded in the trnK tRNA gene intron. Probably assists in splicing its own and other chloroplast group II introns. This chain is Maturase K, found in Dalea purpurea (Violet prairie clover).